The primary structure comprises 243 residues: tRNA (guanine-N(1)-)-methyltransferase (243 aa).

Residues Gly-123 and 143–148 (LGDFVM) contribute to the S-adenosyl-L-methionine site.

The protein belongs to the RNA methyltransferase TrmD family. Homodimer.

It localises to the cytoplasm. It catalyses the reaction guanosine(37) in tRNA + S-adenosyl-L-methionine = N(1)-methylguanosine(37) in tRNA + S-adenosyl-L-homocysteine + H(+). In terms of biological role, specifically methylates guanosine-37 in various tRNAs. This Ruegeria pomeroyi (strain ATCC 700808 / DSM 15171 / DSS-3) (Silicibacter pomeroyi) protein is tRNA (guanine-N(1)-)-methyltransferase.